We begin with the raw amino-acid sequence, 684 residues long: Leishmanolysin-like peptidase (684 aa).

Residue H257 participates in Zn(2+) binding. The active site involves E258. The Zn(2+) site is built by H261 and H364.

Belongs to the peptidase M8 family. Zn(2+) is required as a cofactor.

Its subcellular location is the cytoplasm. In terms of biological role, essential for the coordination of mitotic progression, and also plays a role in cell migration. The sequence is that of Leishmanolysin-like peptidase from Drosophila pseudoobscura pseudoobscura (Fruit fly).